Here is a 129-residue protein sequence, read N- to C-terminus: Transcriptional activator protein (129 aa).

The segment covering 1 to 12 (MRSSSPSQPPSI) has biased composition (low complexity). The tract at residues 1–23 (MRSSSPSQPPSIKKAHRQAKKRA) is disordered. Basic residues predominate over residues 13-23 (KKAHRQAKKRA). Residues 13–28 (KKAHRQAKKRAIRRRR) carry the Nuclear localization signal motif. The segment at 33–50 (CGCSIYFHIDCAGHGFTH) is a zinc-finger region. Residues 73–117 (LFQDKPSRGHAIHQDQDIQRPNPVQPQPQESIGSPQSIPELPSLD) are disordered. Positions 99–109 (QPQESIGSPQS) are enriched in polar residues. Residues 115–129 (SLDDIDDSFWVELFS) are transactivation.

The protein belongs to the geminiviridae transcriptional activator protein family. In terms of assembly, monomer. Homodimer. Homooligomer. Self-interaction correlates with nuclear localization and efficient activation of transcription. Monomers suppress local silencing by interacting with and inactivating host adenosine kinase 2 (ADK2) in the cytoplasm. Interacts with and inhibits host SNF1 kinase. Binds to ssDNA. In terms of processing, phosphorylated.

The protein localises to the host nucleus. The protein resides in the host cytoplasm. Functionally, strong activator of the late viral genes promoters. Enhances the expression of the capsid protein and nuclear shuttle protein. Acts as a suppressor of RNA-mediated gene silencing, also known as post-transcriptional gene silencing (PTGS), a mechanism of plant viral defense that limits the accumulation of viral RNAs. Suppresses the host RNA silencing by inhibiting adenosine kinase 2 (ADK2), a kinase involved in a general methylation pathway. Also suppresses the host basal defense by interacting with and inhibiting SNF1 kinase, a key regulator of cell metabolism implicated in innate antiviral defense. Determines pathogenicity. This is Transcriptional activator protein from Solanum tuberosum (Potato).